The primary structure comprises 185 residues: Ribosome-recycling factor (185 aa).

The protein belongs to the RRF family.

It localises to the cytoplasm. Responsible for the release of ribosomes from messenger RNA at the termination of protein biosynthesis. May increase the efficiency of translation by recycling ribosomes from one round of translation to another. This is Ribosome-recycling factor from Campylobacter jejuni subsp. jejuni serotype O:23/36 (strain 81-176).